Here is a 93-residue protein sequence, read N- to C-terminus: Aspartyl/glutamyl-tRNA(Asn/Gln) amidotransferase subunit C (93 aa).

This sequence belongs to the GatC family. In terms of assembly, heterotrimer of A, B and C subunits.

It catalyses the reaction L-glutamyl-tRNA(Gln) + L-glutamine + ATP + H2O = L-glutaminyl-tRNA(Gln) + L-glutamate + ADP + phosphate + H(+). The catalysed reaction is L-aspartyl-tRNA(Asn) + L-glutamine + ATP + H2O = L-asparaginyl-tRNA(Asn) + L-glutamate + ADP + phosphate + 2 H(+). Allows the formation of correctly charged Asn-tRNA(Asn) or Gln-tRNA(Gln) through the transamidation of misacylated Asp-tRNA(Asn) or Glu-tRNA(Gln) in organisms which lack either or both of asparaginyl-tRNA or glutaminyl-tRNA synthetases. The reaction takes place in the presence of glutamine and ATP through an activated phospho-Asp-tRNA(Asn) or phospho-Glu-tRNA(Gln). The sequence is that of Aspartyl/glutamyl-tRNA(Asn/Gln) amidotransferase subunit C from Methanococcoides burtonii (strain DSM 6242 / NBRC 107633 / OCM 468 / ACE-M).